The primary structure comprises 270 residues: Ribosomal RNA small subunit methyltransferase A (270 aa).

Positions 18, 20, 45, 66, 91, and 112 each coordinate S-adenosyl-L-methionine.

This sequence belongs to the class I-like SAM-binding methyltransferase superfamily. rRNA adenine N(6)-methyltransferase family. RsmA subfamily.

It is found in the cytoplasm. It catalyses the reaction adenosine(1518)/adenosine(1519) in 16S rRNA + 4 S-adenosyl-L-methionine = N(6)-dimethyladenosine(1518)/N(6)-dimethyladenosine(1519) in 16S rRNA + 4 S-adenosyl-L-homocysteine + 4 H(+). In terms of biological role, specifically dimethylates two adjacent adenosines (A1518 and A1519) in the loop of a conserved hairpin near the 3'-end of 16S rRNA in the 30S particle. May play a critical role in biogenesis of 30S subunits. This is Ribosomal RNA small subunit methyltransferase A from Psychromonas ingrahamii (strain DSM 17664 / CCUG 51855 / 37).